We begin with the raw amino-acid sequence, 116 residues long: NADH dehydrogenase [ubiquinone] 1 alpha subcomplex subunit 5 (116 aa).

An N-acetylalanine modification is found at A2. An N6-acetyllysine mark is found at K30, K46, and K60. S89 carries the post-translational modification Phosphoserine. K98 carries the N6-acetyllysine; alternate modification. K98 is subject to N6-succinyllysine; alternate.

This sequence belongs to the complex I NDUFA5 subunit family. In terms of assembly, complex I is composed of 45 different subunits.

Its subcellular location is the mitochondrion inner membrane. Its function is as follows. Accessory subunit of the mitochondrial membrane respiratory chain NADH dehydrogenase (Complex I), that is believed not to be involved in catalysis. Complex I functions in the transfer of electrons from NADH to the respiratory chain. The immediate electron acceptor for the enzyme is believed to be ubiquinone. This chain is NADH dehydrogenase [ubiquinone] 1 alpha subcomplex subunit 5 (Ndufa5), found in Rattus norvegicus (Rat).